We begin with the raw amino-acid sequence, 237 residues long: 1-(5-phosphoribosyl)-5-[(5-phosphoribosylamino)methylideneamino] imidazole-4-carboxamide isomerase (237 aa).

Catalysis depends on Asp8, which acts as the Proton acceptor. The Proton donor role is filled by Asp127.

It belongs to the HisA/HisF family.

The protein resides in the cytoplasm. It catalyses the reaction 1-(5-phospho-beta-D-ribosyl)-5-[(5-phospho-beta-D-ribosylamino)methylideneamino]imidazole-4-carboxamide = 5-[(5-phospho-1-deoxy-D-ribulos-1-ylimino)methylamino]-1-(5-phospho-beta-D-ribosyl)imidazole-4-carboxamide. It functions in the pathway amino-acid biosynthesis; L-histidine biosynthesis; L-histidine from 5-phospho-alpha-D-ribose 1-diphosphate: step 4/9. This chain is 1-(5-phosphoribosyl)-5-[(5-phosphoribosylamino)methylideneamino] imidazole-4-carboxamide isomerase, found in Sulfurovum sp. (strain NBC37-1).